The following is a 489-amino-acid chain: Coiled-coil domain-containing protein 77 (489 aa).

Residue Ser-38 is modified to Phosphoserine. Coiled-coil stretches lie at residues 57–120 (SQEL…QVCL) and 212–487 (ERHQ…NALR).

The protein is Coiled-coil domain-containing protein 77 (Ccdc77) of Mus musculus (Mouse).